Reading from the N-terminus, the 154-residue chain is Calmodulin-like protein 4 (154 aa).

4 consecutive EF-hand domains span residues 7-42, 43-78, 80-115, and 116-151; these read EQMV…LGLE, PTDQ…KMKD, DGDE…LGEK, and MTDE…AERK. Asp-20, Asn-22, Asp-24, Cys-26, Glu-31, Asp-56, Asp-58, Asn-60, Glu-67, Asp-93, Asp-95, Asn-97, and Glu-104 together coordinate Ca(2+). Lys-115 is modified (N6,N6,N6-trimethyllysine). The Ca(2+) site is built by Asp-129, Asp-131, Asp-133, Gln-135, and Glu-140.

Belongs to the calmodulin family.

Potential calcium sensor. The polypeptide is Calmodulin-like protein 4 (CML4) (Oryza sativa subsp. japonica (Rice)).